The sequence spans 189 residues: Ribonuclease HII (189 aa).

One can recognise an RNase H type-2 domain in the interval 1-189; sequence MIAGVDEAGR…PVRRALNIDC (189 aa). Residues aspartate 6, glutamate 7, and aspartate 98 each coordinate a divalent metal cation.

This sequence belongs to the RNase HII family. The cofactor is Mn(2+). It depends on Mg(2+) as a cofactor.

It is found in the cytoplasm. The enzyme catalyses Endonucleolytic cleavage to 5'-phosphomonoester.. Functionally, endonuclease that specifically degrades the RNA of RNA-DNA hybrids. This chain is Ribonuclease HII, found in Acinetobacter baylyi (strain ATCC 33305 / BD413 / ADP1).